The sequence spans 170 residues: Elicitin-like protein 1 (170 aa).

A signal peptide spans 1 to 19; the sequence is MFSKTLVVLAAVAAVTVNG. Disulfide bonds link Cys25/Cys91, Cys47/Cys76, and Cys71/Cys118. Positions 122–170 are disordered; it reads GGGSTPTTAPPTSTTPTTAPPTGTTPTTAPPAGTTPGVTPSPTTPKPAC. Low complexity predominate over residues 126-162; the sequence is TPTTAPPTSTTPTTAPPTGTTPTTAPPAGTTPGVTPS.

The protein belongs to the elicitin family.

It localises to the secreted. In terms of biological role, induces local and distal defense responses (incompatible hypersensitive reaction) in plants from the solanaceae and cruciferae families. Elicits leaf necrosis and causes the accumulation of pathogenesis-related proteins. Might interact with the lipidic molecules of the plasma membrane. The sequence is that of Elicitin-like protein 1 (POD-1) from Pythium oligandrum (Mycoparasitic fungus).